We begin with the raw amino-acid sequence, 351 residues long: Cyanide hydratase (351 aa).

Residues 6–285 enclose the CN hydrolase domain; that stretch reads YKAAAVTSEP…DGLLFVDIDL (280 aa). The Proton acceptor role is filled by glutamate 46. Residue lysine 128 is part of the active site. The active-site Nucleophile is cysteine 163.

The protein belongs to the carbon-nitrogen hydrolase superfamily. Nitrilase family. In terms of assembly, oligomer of dimers, forming left-handed helical fibers with a diameter of 13 nm but with lengths ranging from approximately 1 um at the leading edge of the peak to having approximately the same length and diameter at the trailing edge.

It catalyses the reaction formamide = hydrogen cyanide + H2O. Its function is as follows. Catalyzes the hydration of cyanide to formamide. Degradation of cyanide may be important for plant pathogenic fungi in infection of cyanogenic plants. The chain is Cyanide hydratase from Neurospora crassa (strain ATCC 24698 / 74-OR23-1A / CBS 708.71 / DSM 1257 / FGSC 987).